A 1129-amino-acid chain; its full sequence is DNA-directed RNA polymerase I subunit RPA2 (1129 aa).

The C4-type zinc finger occupies 1061-1093 (CHKCGSILAPLQRIVKRNETGGLSSQPDTCRLC).

The protein belongs to the RNA polymerase beta chain family. Component of the RNA polymerase I (Pol I) complex consisting of at least 13 subunits.

It localises to the nucleus. Its subcellular location is the nucleolus. The catalysed reaction is RNA(n) + a ribonucleoside 5'-triphosphate = RNA(n+1) + diphosphate. Functionally, DNA-dependent RNA polymerase catalyzes the transcription of DNA into RNA using the four ribonucleoside triphosphates as substrates. Second largest core component of RNA polymerase I which synthesizes ribosomal RNA precursors. Proposed to contribute to the polymerase catalytic activity and forms the polymerase active center together with the largest subunit. Pol I is composed of mobile elements and RPA2 is part of the core element with the central large cleft and probably a clamp element that moves to open and close the cleft. In Drosophila melanogaster (Fruit fly), this protein is DNA-directed RNA polymerase I subunit RPA2.